Consider the following 350-residue polypeptide: Biotin synthase (350 aa).

The Radical SAM core domain occupies R38–S262. Residues C53, C57, and C60 each contribute to the [4Fe-4S] cluster site. Residues C97, C128, C188, and R260 each contribute to the [2Fe-2S] cluster site.

Belongs to the radical SAM superfamily. Biotin synthase family. As to quaternary structure, homodimer. Requires [4Fe-4S] cluster as cofactor. [2Fe-2S] cluster serves as cofactor.

It carries out the reaction (4R,5S)-dethiobiotin + (sulfur carrier)-SH + 2 reduced [2Fe-2S]-[ferredoxin] + 2 S-adenosyl-L-methionine = (sulfur carrier)-H + biotin + 2 5'-deoxyadenosine + 2 L-methionine + 2 oxidized [2Fe-2S]-[ferredoxin]. It participates in cofactor biosynthesis; biotin biosynthesis; biotin from 7,8-diaminononanoate: step 2/2. Catalyzes the conversion of dethiobiotin (DTB) to biotin by the insertion of a sulfur atom into dethiobiotin via a radical-based mechanism. This is Biotin synthase from Yersinia enterocolitica serotype O:8 / biotype 1B (strain NCTC 13174 / 8081).